The following is a 160-amino-acid chain: Protein Bel-3 (160 aa).

Homodimer.

It is found in the host cytoplasm. This is Protein Bel-3 (bel3) from Human spumaretrovirus (SFVcpz(hu)).